Here is a 722-residue protein sequence, read N- to C-terminus: Probable carboxypeptidase X1 (722 aa).

The signal sequence occupies residues 1-20; sequence MWGLLLAVTAFAPSVGLGLG. Residues 30 to 54 form a disordered region; that stretch reads APGSTLAPHSSVAQPSTKANETSER. Polar residues predominate over residues 36–49; the sequence is APHSSVAQPSTKAN. N-linked (GlcNAc...) asparagine glycans are attached at residues Asn-49, Asn-200, Asn-210, and Asn-307. The region spanning 103–263 is the F5/8 type C domain; sequence PGCPPLGLES…PCLRAEILAC (161 aa). The cysteines at positions 105 and 263 are disulfide-linked. Residues 287-610 form the Peptidase M14 domain; sequence RHHNYKAMRK…DALLTYLEQV (324 aa). Zn(2+) is bound by residues His-349 and Glu-352. The N-linked (GlcNAc...) asparagine glycan is linked to Asn-461. Residue His-487 coordinates Zn(2+). Glu-580 functions as the Proton donor/acceptor in the catalytic mechanism.

It belongs to the peptidase M14 family. Zn(2+) is required as a cofactor. In terms of tissue distribution, strongly expressed in testis and spleen. Moderately expressed in salivary gland, brain, heart, lung, and kidney. Extremely low expression in liver and muscle. No expression in eye, adrenal, and white adipose tissues.

It localises to the secreted. In terms of biological role, may be involved in cell-cell interactions. No carboxypeptidase activity was found yet. This Mus musculus (Mouse) protein is Probable carboxypeptidase X1 (Cpxm1).